A 524-amino-acid chain; its full sequence is Calcium-dependent protein kinase 1 (524 aa).

The tract at residues 1–34 (MGCSQSSNVKDFKTRRSKFTNGNNYGKSGNNKNS) is disordered. Residue G2 is the site of N-myristoyl glycine attachment. Residue C3 is the site of S-palmitoyl cysteine attachment. Positions 10 to 20 (KDFKTRRSKFT) match the Basic cluster involved in membrane binding motif. Phosphoserine; by autocatalysis is present on residues S17, S28, and S34. Low complexity predominate over residues 21–32 (NGNNYGKSGNNK). One can recognise a Protein kinase domain in the interval 56–325 (YFKVRKLGSG…AKEALNSKWI (270 aa)). ATP is bound by residues 62–70 (LGSGAYGEV) and K85. Phosphoserine; by PKG; by autocatalysis is present on S64. T100 is subject to Phosphothreonine; by autocatalysis. S118 carries the phosphoserine; by autocatalysis modification. D191 acts as the Proton acceptor in catalysis. S217 carries the post-translational modification Phosphoserine. S220 carries the post-translational modification Phosphoserine; by autocatalysis. T231 bears the Phosphothreonine; by PKG; by autocatalysis mark. S335 is subject to Phosphoserine; by autocatalysis. The short motif at 346–353 (NMRKFEGS) is the J domain autoinhibitory motif element. The segment at 346–364 (NMRKFEGSQKLAQAAILFI) is j domain. Residues 354–364 (QKLAQAAILFI) carry the J domain interacts with the EF-hand domains motif. EF-hand domains are found at residues 372–407 (EERKELTDIFKKLDKNGDGQLDKKELIEGYNILRSF), 416–451 (NVEEEVDNILKEVDFDKNGYIEYSEFISVCMDKQIL), 452–487 (FSEERLRDAFNLFDTDKSGKITKEELANLFGLTSIS), and 488–521 (EQMWNEVLGEADKNKDNMIDFDEFVNMMHKICDN). D385, N387, D389, Q391, E396, D429, D431, N433, Y435, E440, D465, D467, S469, K471, E476, D499, N501, D503, M505, and E510 together coordinate Ca(2+).

This sequence belongs to the protein kinase superfamily. Ser/Thr protein kinase family. CDPK subfamily. As to quaternary structure, monomer. Forms a high molecular weight (250 and 400 kDa) complex. Forms a complex composed of CDPK1, PKA regulatory subunit PKAr and 14-3-3I; the complex is formed in merozoites in response to low extracellular level of K(+) and may play a role in microneme secretion. Interacts (when phosphorylated) with 14-3-3I in a Ca(2+)-independent manner; the interaction does not regulate CDPK1 catalytic activity but is required for merozoite invasion of host erythrocytes. Interacts with PKA regulatory subunit PKAr; in a Ca(2+)-dependent manner. Interacts with SERA5 p50 in the late schizont stage. Interacts with inner membrane complex protein IMC1g in late schizonts. Interacts with rhoptry protein RhopH3 in merozoites. Mg(2+) is required as a cofactor. Myristoylated. Myristoylation, palmitoylation and the basic cluster motif are required for the localization to the parasitophorous vacuole membrane. Post-translationally, palmitoylated. Palmitoylation increases in merozoites in response to low level of extracellular K(+) in the host blood. Myristoylation, palmitoylation and the basic cluster motif are required for the localization to the parasitophorous vacuole membrane. In terms of processing, phosphorylation at Ser-64 occurs at late schizont stage and regulates CDPK1 protein-protein interaction. Phosphorylated at Ser-28, Ser-34 and Ser-64 in merozoites in response to low extracellular level of K(+). Phosphorylation at Thr-231 may regulate CDPK1 kinase activity. Phosphorylation increases in response to an increase in intracellular Ca(2+) levels. Autophosphorylated in vitro. Autophosphorylation does not affect membrane localization in vitro.

The protein localises to the membrane. It is found in the cell membrane. It localises to the parasitophorous vacuole membrane. The protein resides in the cytoplasm. Its subcellular location is the cell projection. The protein localises to the cilium. It is found in the flagellum. It localises to the host cell membrane. It catalyses the reaction L-seryl-[protein] + ATP = O-phospho-L-seryl-[protein] + ADP + H(+). The catalysed reaction is L-threonyl-[protein] + ATP = O-phospho-L-threonyl-[protein] + ADP + H(+). Activated by calcium. Upon calcium binding to the EF-hand domains, the C-terminus of the junction domain (J domain) undergoes a conformational change which results in the dissociation of the pseudo-substrate inhibitory motif from the catalytic domain. This, in turn may facilitate the autophosphorylation of the activation loop at Thr-231, which leads to the kinase activation. May be negatively regulated by PKA-mediated phosphorylation. Inhibited by purfalcamine. Functionally, calcium-dependent protein kinase which acts as a sensor and effector of intracellular Ca(2+) levels probably in part downstream of cGMP-activated PKG kinase. By phosphorylating various proteins, required for microneme secretion and thus merozoite egress from and invasion of host erythrocytes. During gametogenesis, essential for the development of both male and female gametes. Phosphorylates SERA5 p50 which enhances SERA5 p50 protease activity; however, SERA5 p50 protease activity has been shown in other studies to be controversial. Probably by phosphorylating SERA5 p50, plays a role in merozoite egress from host erythrocytes. Probably prior or during merozoite invasion of host erythrocytes, phosphorylates rhoptry protein RhopH3 which is required for RhopH3 localization to rhoptries and for its secretion. Probably in late schizonts, phosphorylates myosin A tail domain-interacting protein MTIP and glideosome-associated protein 45 GAP45, both of which are components of the motor complex that generates the force required by the parasite to invade host cells. In late schizonts, phosphorylates inner membrane complex protein IMC1g. In late schizonts, phosphorylates PKA regulatory subunit PKAr in a calcium-dependent manner, which may contribute to the dissociation of regulatory PKAr and catalytic PKAc subunits and promote the activation of PKAc. May phosphorylate raf kinase inhibitory protein RKIP which in turn may regulate CDPK1 catalytic activity. May phosphorylate proteins of the host erythrocyte membranes. The polypeptide is Calcium-dependent protein kinase 1 (Plasmodium falciparum (isolate 3D7)).